Reading from the N-terminus, the 261-residue chain is Small ribosomal subunit protein eS1 (261 aa).

The span at 1–18 shows a compositional bias: basic residues; sequence MAVGKNKRISKGKKGGKK. The segment at 1-20 is disordered; that stretch reads MAVGKNKRISKGKKGGKKKA.

It belongs to the eukaryotic ribosomal protein eS1 family. As to quaternary structure, component of the small ribosomal subunit. Mature ribosomes consist of a small (40S) and a large (60S) subunit. The 40S subunit contains about 33 different proteins and 1 molecule of RNA (18S). The 60S subunit contains about 49 different proteins and 3 molecules of RNA (25S, 5.8S and 5S).

The protein resides in the cytoplasm. The sequence is that of Small ribosomal subunit protein eS1 from Catharanthus roseus (Madagascar periwinkle).